The sequence spans 370 residues: tRNA 2-selenouridine synthase (370 aa).

The Rhodanese domain maps to 12–136; the sequence is FLEDVPMMDT…MRNFLLDTTR (125 aa). The active-site S-selanylcysteine intermediate is C95.

This sequence belongs to the SelU family. As to quaternary structure, monomer.

The catalysed reaction is 5-methylaminomethyl-2-thiouridine(34) in tRNA + selenophosphate + (2E)-geranyl diphosphate + H2O + H(+) = 5-methylaminomethyl-2-selenouridine(34) in tRNA + (2E)-thiogeraniol + phosphate + diphosphate. It carries out the reaction 5-methylaminomethyl-2-thiouridine(34) in tRNA + (2E)-geranyl diphosphate = 5-methylaminomethyl-S-(2E)-geranyl-thiouridine(34) in tRNA + diphosphate. It catalyses the reaction 5-methylaminomethyl-S-(2E)-geranyl-thiouridine(34) in tRNA + selenophosphate + H(+) = 5-methylaminomethyl-2-(Se-phospho)selenouridine(34) in tRNA + (2E)-thiogeraniol. The enzyme catalyses 5-methylaminomethyl-2-(Se-phospho)selenouridine(34) in tRNA + H2O = 5-methylaminomethyl-2-selenouridine(34) in tRNA + phosphate. Involved in the post-transcriptional modification of the uridine at the wobble position (U34) of tRNA(Lys), tRNA(Glu) and tRNA(Gln). Catalyzes the conversion of 2-thiouridine (S2U-RNA) to 2-selenouridine (Se2U-RNA). Acts in a two-step process involving geranylation of 2-thiouridine (S2U) to S-geranyl-2-thiouridine (geS2U) and subsequent selenation of the latter derivative to 2-selenouridine (Se2U) in the tRNA chain. In Azotobacter vinelandii (strain DJ / ATCC BAA-1303), this protein is tRNA 2-selenouridine synthase.